The chain runs to 480 residues: 6-phosphogluconate dehydrogenase, decarboxylating (480 aa).

Residues 11–16, 34–36, 76–78, and N104 contribute to the NADP(+) site; these read GLAVMG, NRS, and IKA. Substrate contacts are provided by residues N104 and 130–132; that span reads SGG. The active-site Proton acceptor is K184. Residue 187–188 coordinates substrate; the sequence is HN. Catalysis depends on E191, which acts as the Proton donor. Positions 192, 261, 288, 448, and 454 each coordinate substrate.

It belongs to the 6-phosphogluconate dehydrogenase family. In terms of assembly, homodimer.

It catalyses the reaction 6-phospho-D-gluconate + NADP(+) = D-ribulose 5-phosphate + CO2 + NADPH. Its pathway is carbohydrate degradation; pentose phosphate pathway; D-ribulose 5-phosphate from D-glucose 6-phosphate (oxidative stage): step 3/3. Functionally, catalyzes the oxidative decarboxylation of 6-phosphogluconate to ribulose 5-phosphate and CO(2), with concomitant reduction of NADP to NADPH. This Chlamydia trachomatis serovar D (strain ATCC VR-885 / DSM 19411 / UW-3/Cx) protein is 6-phosphogluconate dehydrogenase, decarboxylating (gnd).